The primary structure comprises 232 residues: Expansin-YoaJ (232 aa).

Residues 1-25 (MKKIMSAFVGMVLLTIFCFSPQASA) form the signal peptide. One can recognise an Expansin-like EG45 domain in the interval 58–127 (ITAINPADLN…MKDGKINIKW (70 aa)).

It localises to the secreted. The protein resides in the cell wall. Its function is as follows. May promote colonization of plant roots. May cause loosening and extension of plant cell walls by disrupting non-covalent bonding between cellulose microfibrils and matrix glucans. Has very low expansin activity (in vitro). No enzymatic activity has been found. Binds to peptidoglycan and to plant cell walls. This is Expansin-YoaJ (yoaJ) from Bacillus subtilis (strain 168).